Reading from the N-terminus, the 254-residue chain is Anti-sigma-M factor RsmA (254 aa).

Residues 1 to 112 (MSAADKDPDK…AARPHVHPVR (112 aa)) lie on the Cytoplasmic side of the membrane. A helical membrane pass occupies residues 113-133 (MIAGAAGLCAVATAIGVGAVV). Residues 134 to 254 (DAPPPAPSAP…LLASTVVPRA (121 aa)) are Extracellular-facing.

As to quaternary structure, interacts with ECF RNA polymerase sigma factor SigM; this should inhibit the interaction of SigM with the RNA polymerase catalytic core. In terms of processing, probably cleaved within the membrane by Rip1 near the cytoplasmic membrane interface.

The protein localises to the cell membrane. In terms of biological role, an anti-sigma factor for extracytoplasmic function (ECF) sigma factor SigM. ECF sigma factors are held in an inactive form by an anti-sigma factor until released by regulated intramembrane proteolysis (RIP). RIP occurs when an extracytoplasmic signal triggers a concerted proteolytic cascade to transmit information and elicit cellular responses. The membrane-spanning regulatory substrate protein is first cut extracytoplasmically (site-1 protease, S1P), then within the membrane itself (site-2 protease, S2P, Rip1), while cytoplasmic proteases finish degrading the regulatory protein, liberating the sigma factor. This chain is Anti-sigma-M factor RsmA (rsmA), found in Mycobacterium tuberculosis (strain ATCC 35801 / TMC 107 / Erdman).